A 346-amino-acid polypeptide reads, in one-letter code: ATP-dependent 6-phosphofructokinase (346 aa).

ATP-binding positions include glycine 13, arginine 76–leucine 77, and glycine 106–threonine 109. Mg(2+) is bound at residue glutamate 107. Residues threonine 129–aspartate 131, arginine 166, methionine 173–arginine 175, glutamate 226, arginine 270, and histidine 276–arginine 279 each bind substrate. Aspartate 131 serves as the catalytic Proton acceptor.

It belongs to the phosphofructokinase type A (PFKA) family. Mixed-substrate PFK group III subfamily. Homodimer or homotetramer. The cofactor is Mg(2+).

Its subcellular location is the cytoplasm. It carries out the reaction beta-D-fructose 6-phosphate + ATP = beta-D-fructose 1,6-bisphosphate + ADP + H(+). It functions in the pathway carbohydrate degradation; glycolysis; D-glyceraldehyde 3-phosphate and glycerone phosphate from D-glucose: step 3/4. Its function is as follows. Catalyzes the phosphorylation of D-fructose 6-phosphate to fructose 1,6-bisphosphate by ATP, the first committing step of glycolysis. The protein is ATP-dependent 6-phosphofructokinase of Corynebacterium efficiens (strain DSM 44549 / YS-314 / AJ 12310 / JCM 11189 / NBRC 100395).